An 89-amino-acid polypeptide reads, in one-letter code: MANNMVASPYKNTFMMIALVLILLISGSEARSNGIYDPMCPGVCGNLVKPDCNGLCHELGFPAGGYCKPGNTCCCKKKDSGPVDVPPTA.

Positions 1–30 are cleaved as a signal peptide; sequence MANNMVASPYKNTFMMIALVLILLISGSEA. 4 disulfides stabilise this stretch: C40–C75, C44–C67, C52–C73, and C56–C74.

This sequence belongs to the DEFL family.

The protein resides in the secreted. This chain is Defensin-like protein 78, found in Arabidopsis thaliana (Mouse-ear cress).